Here is a 441-residue protein sequence, read N- to C-terminus: 3-phosphoshikimate 1-carboxyvinyltransferase (441 aa).

Residues lysine 22, serine 23, and arginine 27 each contribute to the 3-phosphoshikimate site. Lysine 22 contacts phosphoenolpyruvate. Residues glycine 95 and arginine 123 each contribute to the phosphoenolpyruvate site. Positions 168, 170, 321, and 348 each coordinate 3-phosphoshikimate. Glutamine 170 serves as a coordination point for phosphoenolpyruvate. The Proton acceptor role is filled by aspartate 321. Residues arginine 352 and arginine 400 each coordinate phosphoenolpyruvate.

The protein belongs to the EPSP synthase family. In terms of assembly, monomer.

Its subcellular location is the cytoplasm. The enzyme catalyses 3-phosphoshikimate + phosphoenolpyruvate = 5-O-(1-carboxyvinyl)-3-phosphoshikimate + phosphate. The protein operates within metabolic intermediate biosynthesis; chorismate biosynthesis; chorismate from D-erythrose 4-phosphate and phosphoenolpyruvate: step 6/7. Its function is as follows. Catalyzes the transfer of the enolpyruvyl moiety of phosphoenolpyruvate (PEP) to the 5-hydroxyl of shikimate-3-phosphate (S3P) to produce enolpyruvyl shikimate-3-phosphate and inorganic phosphate. This Novosphingobium aromaticivorans (strain ATCC 700278 / DSM 12444 / CCUG 56034 / CIP 105152 / NBRC 16084 / F199) protein is 3-phosphoshikimate 1-carboxyvinyltransferase.